Consider the following 206-residue polypeptide: Pyridoxine/pyridoxamine 5'-phosphate oxidase (206 aa).

FMN-binding positions include 53-58 (RMVLLK), 68-69 (YT), Lys75, and Gln97. Lys58 contributes to the substrate binding site. Substrate contacts are provided by Tyr115, Arg119, and Ser123. Residues 132-133 (QS) and Trp177 contribute to the FMN site. 183 to 185 (RLH) provides a ligand contact to substrate. Residue Arg187 coordinates FMN.

It belongs to the pyridoxamine 5'-phosphate oxidase family. In terms of assembly, homodimer. FMN is required as a cofactor.

The enzyme catalyses pyridoxamine 5'-phosphate + O2 + H2O = pyridoxal 5'-phosphate + H2O2 + NH4(+). It catalyses the reaction pyridoxine 5'-phosphate + O2 = pyridoxal 5'-phosphate + H2O2. It participates in cofactor metabolism; pyridoxal 5'-phosphate salvage; pyridoxal 5'-phosphate from pyridoxamine 5'-phosphate: step 1/1. It functions in the pathway cofactor metabolism; pyridoxal 5'-phosphate salvage; pyridoxal 5'-phosphate from pyridoxine 5'-phosphate: step 1/1. In terms of biological role, catalyzes the oxidation of either pyridoxine 5'-phosphate (PNP) or pyridoxamine 5'-phosphate (PMP) into pyridoxal 5'-phosphate (PLP). This Rhizobium leguminosarum bv. trifolii (strain WSM2304) protein is Pyridoxine/pyridoxamine 5'-phosphate oxidase.